The primary structure comprises 167 residues: Photosystem I assembly protein Ycf3 (167 aa).

3 TPR repeats span residues 35–68 (AFTY…EIDP), 72–105 (SYIL…NPSL), and 120–153 (GEQA…APGN).

It belongs to the Ycf3 family.

The protein localises to the plastid. It is found in the chloroplast thylakoid membrane. Its function is as follows. Essential for the assembly of the photosystem I (PSI) complex. May act as a chaperone-like factor to guide the assembly of the PSI subunits. This Chara vulgaris (Common stonewort) protein is Photosystem I assembly protein Ycf3.